The sequence spans 72 residues: Large ribosomal subunit protein bL28 (72 aa).

It belongs to the bacterial ribosomal protein bL28 family.

The protein is Large ribosomal subunit protein bL28 of Chlorobaculum tepidum (strain ATCC 49652 / DSM 12025 / NBRC 103806 / TLS) (Chlorobium tepidum).